We begin with the raw amino-acid sequence, 421 residues long: Histidine--tRNA ligase (421 aa).

The protein belongs to the class-II aminoacyl-tRNA synthetase family. As to quaternary structure, homodimer.

The protein localises to the cytoplasm. It catalyses the reaction tRNA(His) + L-histidine + ATP = L-histidyl-tRNA(His) + AMP + diphosphate + H(+). The polypeptide is Histidine--tRNA ligase (Francisella tularensis subsp. mediasiatica (strain FSC147)).